The following is a 282-amino-acid chain: Undecaprenyl-diphosphatase (282 aa).

Transmembrane regions (helical) follow at residues valine 7–isoleucine 29, phenylalanine 45–tryptophan 65, glycine 89–lysine 109, leucine 115–isoleucine 135, leucine 153–leucine 173, phenylalanine 196–leucine 216, threonine 229–methionine 249, and tryptophan 258–isoleucine 278.

This sequence belongs to the UppP family.

Its subcellular location is the cell inner membrane. It catalyses the reaction di-trans,octa-cis-undecaprenyl diphosphate + H2O = di-trans,octa-cis-undecaprenyl phosphate + phosphate + H(+). Catalyzes the dephosphorylation of undecaprenyl diphosphate (UPP). Confers resistance to bacitracin. The sequence is that of Undecaprenyl-diphosphatase from Acidiphilium cryptum (strain JF-5).